The following is a 552-amino-acid chain: AP-1-like transcription factor (552 aa).

A compositionally biased stretch (polar residues) spans 1–14; the sequence is MSGQTETLSSTSNI. Residues 1 to 99 form a disordered region; it reads MSGQTETLSS…QRAFRKRKED (99 aa). Residues 36 to 47 are compositionally biased toward basic and acidic residues; sequence PVSDRSSRRTSS. Residues 48 to 61 show a composition bias toward acidic residues; the sequence is EEVDLMPNVDDEVD. Basic and acidic residues predominate over residues 62-80; that stretch reads GDVKPKKIGRKNSDQEPSS. The 64-residue stretch at 76–139 folds into the bZIP domain; it reads QEPSSKRKAQ…RQLEEELRIL (64 aa). The Nuclear localization signal motif lies at 81–88; that stretch reads KRKAQNRA. Residues 81–102 form a basic motif region; it reads KRKAQNRAAQRAFRKRKEDHLK. Positions 104 to 111 are leucine-zipper; it reads LETQVVTL. A disordered region spans residues 213-244; it reads QVPPTLVDSNSAQGTLSPETPSSSDSPSNLYL. Residues 219 to 228 are compositionally biased toward polar residues; sequence VDSNSAQGTL. Residues 229–240 show a composition bias toward low complexity; sequence SPETPSSSDSPS. Positions 259–290 are n-CRD; the sequence is CSALSNGENGEDVADGKQFCQKLSTACGSIAC. Intrachain disulfides connect C278–C501 and C285–C532. Positions 460-489 are disordered; that stretch reads ISNHPDEVPPDGLPQKGKHDTSSQMPSENE. Residues 501–532 are c-CRD; it reads CPKVWSKIINHPRFESFDIDDLCSKLKNKAKC. The Nuclear export signal motif lies at 515–533; sequence ESFDIDDLCSKLKNKAKCS.

It belongs to the bZIP family. YAP subfamily. In terms of assembly, homodimer. The reduced form of pap1 interacts in the nucleus with the nuclear export protein crm1, and in the cytoplasm with the peroxiredoxin tpx1. Post-translationally, depending on the oxidative stress inducing agent, pap1 can undergo two distinct conformational changes, both masking the nuclear export signal, thus abolishing nuclear export by crm1/exportin 1. The glutathione-depleting agent diethylmaleate (DEM) leads to the non-reversible modification of at least 2 cysteine residues in the c-CRD. Peroxide stress induces the formation of a tpx1-dependent interdomain disulfide bond between Cys-278 and Cys-501.

It localises to the nucleus. Its subcellular location is the cytoplasm. Functionally, transcription activator involved in multidrug resistance, oxidative stress response, and redox homeostasis. Regulates the transcription of genes encoding antioxidant enzymes like catalase ctt1 and components of the cellular thiol-reducing pathways, including the thioredoxin system (trx2, trr1), ABC transporters involved in multidrug resistance like bfr1/hba2 and pmd1 as well as the gene obr1/apt1. Preferentially binds to promoters with the core binding site 5'-TTA[CG]TAA-3'. Activity of the transcription factor is controlled through oxidation of specific cysteine residues resulting in the alteration of its subcellular location. Oxidative stress induces nuclear accumulation and as a result pap1 transcriptional activity. Required for sty1/spc1-conferred staurosporine resistance. The protein is AP-1-like transcription factor (pap1) of Schizosaccharomyces pombe (strain 972 / ATCC 24843) (Fission yeast).